Consider the following 481-residue polypeptide: Betaine aldehyde dehydrogenase 2 (481 aa).

K(+) contacts are provided by Ser29 and Asp96. 152-154 is a binding site for NAD(+); sequence GAW. Lys164 (charge relay system) is an active-site residue. 178-181 is an NAD(+) binding site; the sequence is KPSE. A K(+)-binding site is contributed by Val182. Position 231–234 (231–234) interacts with NAD(+); that stretch reads SVKT. K(+) is bound at residue Ile246. Glu252 acts as the Proton acceptor in catalysis. Residues Gly254, Cys286, and Glu383 each coordinate NAD(+). Cys286 acts as the Nucleophile in catalysis. Cys286 is modified (cysteine sulfenic acid (-SOH)). Residues Lys453 and Gly456 each contribute to the K(+) site. Glu460 acts as the Charge relay system in catalysis.

It belongs to the aldehyde dehydrogenase family. Dimer of dimers. Requires K(+) as cofactor.

The catalysed reaction is betaine aldehyde + NAD(+) + H2O = glycine betaine + NADH + 2 H(+). The protein operates within amine and polyamine biosynthesis; betaine biosynthesis via choline pathway; betaine from betaine aldehyde: step 1/1. Involved in the biosynthesis of the osmoprotectant glycine betaine. Catalyzes the irreversible oxidation of betaine aldehyde to the corresponding acid. This chain is Betaine aldehyde dehydrogenase 2, found in Rhizobium meliloti (strain 1021) (Ensifer meliloti).